The primary structure comprises 420 residues: Glutamate dehydrogenase (420 aa).

Lys105 is a catalytic residue. 220-226 (GYGNAGY) is a binding site for NAD(+).

The protein belongs to the Glu/Leu/Phe/Val dehydrogenases family. In terms of assembly, homohexamer.

Its subcellular location is the cytoplasm. The catalysed reaction is L-glutamate + NAD(+) + H2O = 2-oxoglutarate + NH4(+) + NADH + H(+). It carries out the reaction L-glutamate + NADP(+) + H2O = 2-oxoglutarate + NH4(+) + NADPH + H(+). This Pyrococcus furiosus (strain ATCC 43587 / DSM 3638 / JCM 8422 / Vc1) protein is Glutamate dehydrogenase (gdhA).